The chain runs to 85 residues: Transcription factor 4 (85 aa).

A bHLH domain is found at 7 to 60 (ERRMANNARERLRVRDINEAFKELGRMVQLHLKSDKPQTKLLILHQAVAVILSL). Residues 62–85 (QQVRERNLNPKAACLKRREEEKVS) are class A specific domain.

In terms of assembly, efficient DNA binding requires dimerization with another bHLH protein. Forms homo- or heterooligomers with myogenin.

Its subcellular location is the nucleus. Transcription factor that binds to the immunoglobulin enhancer Mu-E5/KE5-motif. Involved in the initiation of neuronal differentiation. Binds to the E-box present in the somatostatin receptor 2 initiator element (SSTR2-INR) to activate transcription. The polypeptide is Transcription factor 4 (TCF4) (Gallus gallus (Chicken)).